A 78-amino-acid chain; its full sequence is UPF0291 protein SE_1024 (78 aa).

The disordered stretch occupies residues 53–78 (TKVIDPEGNDVTPEKLKKIQEEKHNK). Residues 64 to 78 (TPEKLKKIQEEKHNK) show a composition bias toward basic and acidic residues.

It belongs to the UPF0291 family.

Its subcellular location is the cytoplasm. The protein is UPF0291 protein SE_1024 of Staphylococcus epidermidis (strain ATCC 12228 / FDA PCI 1200).